The following is a 444-amino-acid chain: Glutamate--tRNA ligase 2 (444 aa).

A 'HIGH' region motif is present at residues 7-17; the sequence is PSPTGYLHVGN. The 'KMSKS' region motif lies at 240–244; it reads KLSKR. Lys-243 contributes to the ATP binding site.

This sequence belongs to the class-I aminoacyl-tRNA synthetase family. Glutamate--tRNA ligase type 1 subfamily. As to quaternary structure, monomer.

It is found in the cytoplasm. The enzyme catalyses tRNA(Glu) + L-glutamate + ATP = L-glutamyl-tRNA(Glu) + AMP + diphosphate. In terms of biological role, catalyzes the attachment of glutamate to tRNA(Glu) in a two-step reaction: glutamate is first activated by ATP to form Glu-AMP and then transferred to the acceptor end of tRNA(Glu). In Gluconobacter oxydans (strain 621H) (Gluconobacter suboxydans), this protein is Glutamate--tRNA ligase 2.